A 249-amino-acid polypeptide reads, in one-letter code: Small ribosomal subunit protein uS3 (249 aa).

The 72-residue stretch at 23–94 (LNEFFTRELS…TVELYAEKVQ (72 aa)) folds into the KH type-2 domain. Phosphoserine is present on residues Ser-32, Ser-37, Ser-106, and Ser-141.

Belongs to the universal ribosomal protein uS3 family. Component of the small ribosomal subunit (SSU). Mature yeast ribosomes consist of a small (40S) and a large (60S) subunit. The 40S small subunit contains 1 molecule of ribosomal RNA (18S rRNA) and at least 33 different proteins. The large 60S subunit contains 3 rRNA molecules (25S, 5.8S and 5S rRNA) and at least 46 different proteins.

The protein resides in the cytoplasm. Its function is as follows. Component of the ribosome, a large ribonucleoprotein complex responsible for the synthesis of proteins in the cell. The small ribosomal subunit (SSU) binds messenger RNAs (mRNAs) and translates the encoded message by selecting cognate aminoacyl-transfer RNA (tRNA) molecules. The large subunit (LSU) contains the ribosomal catalytic site termed the peptidyl transferase center (PTC), which catalyzes the formation of peptide bonds, thereby polymerizing the amino acids delivered by tRNAs into a polypeptide chain. The nascent polypeptides leave the ribosome through a tunnel in the LSU and interact with protein factors that function in enzymatic processing, targeting, and the membrane insertion of nascent chains at the exit of the ribosomal tunnel. This is Small ribosomal subunit protein uS3 (rps3) from Schizosaccharomyces pombe (strain 972 / ATCC 24843) (Fission yeast).